A 520-amino-acid polypeptide reads, in one-letter code: Glucose-6-phosphate isomerase (520 aa).

Glu327 (proton donor) is an active-site residue. Active-site residues include His358 and Lys486.

Belongs to the GPI family.

It localises to the cytoplasm. It carries out the reaction alpha-D-glucose 6-phosphate = beta-D-fructose 6-phosphate. The protein operates within carbohydrate biosynthesis; gluconeogenesis. It participates in carbohydrate degradation; glycolysis; D-glyceraldehyde 3-phosphate and glycerone phosphate from D-glucose: step 2/4. Its function is as follows. Catalyzes the reversible isomerization of glucose-6-phosphate to fructose-6-phosphate. This chain is Glucose-6-phosphate isomerase, found in Bordetella avium (strain 197N).